Here is a 229-residue protein sequence, read N- to C-terminus: ACD11 homolog protein (229 aa).

Positions 84, 88, 123, 127, and 166 each coordinate an N-acylsphingoid base 1-phosphate.

Belongs to the GLTP family.

This is ACD11 homolog protein from Arabidopsis thaliana (Mouse-ear cress).